A 165-amino-acid chain; its full sequence is UPF0262 protein Sala_0765 (165 aa).

This sequence belongs to the UPF0262 family.

The protein is UPF0262 protein Sala_0765 of Sphingopyxis alaskensis (strain DSM 13593 / LMG 18877 / RB2256) (Sphingomonas alaskensis).